Reading from the N-terminus, the 408-residue chain is Phosphoglycerate kinase (408 aa).

Substrate-binding positions include 24–26 (DLN), Arg39, 62–65 (HLGR), Arg121, and Arg161. Residues Lys211, Gly307, Glu338, and 364-367 (GGDS) contribute to the ATP site.

Belongs to the phosphoglycerate kinase family. As to quaternary structure, monomer.

It localises to the cytoplasm. The catalysed reaction is (2R)-3-phosphoglycerate + ATP = (2R)-3-phospho-glyceroyl phosphate + ADP. It participates in carbohydrate degradation; glycolysis; pyruvate from D-glyceraldehyde 3-phosphate: step 2/5. The polypeptide is Phosphoglycerate kinase (Arthrobacter sp. (strain FB24)).